The following is a 373-amino-acid chain: Chaperone protein DnaJ (373 aa).

The J domain occupies 5–70 (DFYATLGVAR…EKRAMYDQYG (66 aa)). Residues 134 to 212 (GVKKRINIPT…CRGAGRNKAV (79 aa)) form a CR-type zinc finger. Zn(2+)-binding residues include Cys147, Cys150, Cys164, Cys167, Cys186, Cys189, Cys200, and Cys203. 4 CXXCXGXG motif repeats span residues 147–154 (CDVCNGSG), 164–171 (CPTCKGSG), 186–193 (CPTCHGAG), and 200–207 (CVKCRGAG).

The protein belongs to the DnaJ family. As to quaternary structure, homodimer. Zn(2+) is required as a cofactor.

The protein localises to the cytoplasm. Participates actively in the response to hyperosmotic and heat shock by preventing the aggregation of stress-denatured proteins and by disaggregating proteins, also in an autonomous, DnaK-independent fashion. Unfolded proteins bind initially to DnaJ; upon interaction with the DnaJ-bound protein, DnaK hydrolyzes its bound ATP, resulting in the formation of a stable complex. GrpE releases ADP from DnaK; ATP binding to DnaK triggers the release of the substrate protein, thus completing the reaction cycle. Several rounds of ATP-dependent interactions between DnaJ, DnaK and GrpE are required for fully efficient folding. Also involved, together with DnaK and GrpE, in the DNA replication of plasmids through activation of initiation proteins. This chain is Chaperone protein DnaJ, found in Neisseria meningitidis serogroup C (strain 053442).